Consider the following 951-residue polypeptide: Valine--tRNA ligase (951 aa).

Residues 40–50 (PNVTGSLHMGH) carry the 'HIGH' region motif. A 'KMSKS' region motif is present at residues 551–555 (KMSKS). Lys554 lines the ATP pocket. The stretch at 879-950 (MAGLIDVEAE…LLEQKAKIES (72 aa)) forms a coiled coil.

Belongs to the class-I aminoacyl-tRNA synthetase family. ValS type 1 subfamily. As to quaternary structure, monomer.

The protein resides in the cytoplasm. It catalyses the reaction tRNA(Val) + L-valine + ATP = L-valyl-tRNA(Val) + AMP + diphosphate. Its function is as follows. Catalyzes the attachment of valine to tRNA(Val). As ValRS can inadvertently accommodate and process structurally similar amino acids such as threonine, to avoid such errors, it has a 'posttransfer' editing activity that hydrolyzes mischarged Thr-tRNA(Val) in a tRNA-dependent manner. The polypeptide is Valine--tRNA ligase (Pseudoalteromonas translucida (strain TAC 125)).